The primary structure comprises 462 residues: tRNA modification GTPase MnmE (462 aa).

Positions 22, 87, and 126 each coordinate (6S)-5-formyl-5,6,7,8-tetrahydrofolate. The 163-residue stretch at 220–382 (GLKVAIVGRP…LARKVQEIVL (163 aa)) folds into the TrmE-type G domain. Asn230 is a K(+) binding site. Residues 230 to 235 (NVGKSS), 249 to 255 (SNIPGTT), and 274 to 277 (DTAG) contribute to the GTP site. Position 234 (Ser234) interacts with Mg(2+). 3 residues coordinate K(+): Ser249, Ile251, and Thr254. Residue Thr255 coordinates Mg(2+). Lys462 is a binding site for (6S)-5-formyl-5,6,7,8-tetrahydrofolate.

Belongs to the TRAFAC class TrmE-Era-EngA-EngB-Septin-like GTPase superfamily. TrmE GTPase family. Homodimer. Heterotetramer of two MnmE and two MnmG subunits. K(+) serves as cofactor.

It is found in the cytoplasm. In terms of biological role, exhibits a very high intrinsic GTPase hydrolysis rate. Involved in the addition of a carboxymethylaminomethyl (cmnm) group at the wobble position (U34) of certain tRNAs, forming tRNA-cmnm(5)s(2)U34. In Moorella thermoacetica (strain ATCC 39073 / JCM 9320), this protein is tRNA modification GTPase MnmE.